The primary structure comprises 193 residues: Pyridoxal 5'-phosphate synthase subunit PdxT (193 aa).

Residue 48-50 (GES) participates in L-glutamine binding. Catalysis depends on cysteine 80, which acts as the Nucleophile. Residues arginine 112 and 140–141 (IR) each bind L-glutamine. Residues histidine 176 and glutamate 178 each act as charge relay system in the active site.

Belongs to the glutaminase PdxT/SNO family. In terms of assembly, in the presence of PdxS, forms a dodecamer of heterodimers. Only shows activity in the heterodimer.

It carries out the reaction aldehydo-D-ribose 5-phosphate + D-glyceraldehyde 3-phosphate + L-glutamine = pyridoxal 5'-phosphate + L-glutamate + phosphate + 3 H2O + H(+). The enzyme catalyses L-glutamine + H2O = L-glutamate + NH4(+). Its pathway is cofactor biosynthesis; pyridoxal 5'-phosphate biosynthesis. In terms of biological role, catalyzes the hydrolysis of glutamine to glutamate and ammonia as part of the biosynthesis of pyridoxal 5'-phosphate. The resulting ammonia molecule is channeled to the active site of PdxS. This is Pyridoxal 5'-phosphate synthase subunit PdxT from Mycolicibacterium smegmatis (strain ATCC 700084 / mc(2)155) (Mycobacterium smegmatis).